Consider the following 60-residue polypeptide: MAVPARRTSKAKKNKRRTHYNLTAPTVKFDETTGDYSRSHRVSLKGYYKGRKIAKANAAK.

This sequence belongs to the bacterial ribosomal protein bL32 family.

The polypeptide is Large ribosomal subunit protein bL32 (Streptococcus mutans serotype c (strain ATCC 700610 / UA159)).